The primary structure comprises 155 residues: S-ribosylhomocysteine lyase (155 aa).

H57, H61, and C124 together coordinate Fe cation.

Belongs to the LuxS family. In terms of assembly, homodimer. Requires Fe cation as cofactor.

The enzyme catalyses S-(5-deoxy-D-ribos-5-yl)-L-homocysteine = (S)-4,5-dihydroxypentane-2,3-dione + L-homocysteine. In terms of biological role, involved in the synthesis of autoinducer 2 (AI-2) which is secreted by bacteria and is used to communicate both the cell density and the metabolic potential of the environment. The regulation of gene expression in response to changes in cell density is called quorum sensing. Catalyzes the transformation of S-ribosylhomocysteine (RHC) to homocysteine (HC) and 4,5-dihydroxy-2,3-pentadione (DPD). The chain is S-ribosylhomocysteine lyase from Listeria monocytogenes serotype 4a (strain HCC23).